A 119-amino-acid chain; its full sequence is Large ribosomal subunit protein bL20 (119 aa).

It belongs to the bacterial ribosomal protein bL20 family.

Its function is as follows. Binds directly to 23S ribosomal RNA and is necessary for the in vitro assembly process of the 50S ribosomal subunit. It is not involved in the protein synthesizing functions of that subunit. This chain is Large ribosomal subunit protein bL20, found in Bradyrhizobium diazoefficiens (strain JCM 10833 / BCRC 13528 / IAM 13628 / NBRC 14792 / USDA 110).